The sequence spans 49 residues: MARNEAAIKRTLEKQICMRCNARNPQRASECRKCGYSNLRPKSKERRAA.

The protein belongs to the eukaryotic ribosomal protein eL40 family.

This is Large ribosomal subunit protein eL40 from Haloquadratum walsbyi (strain DSM 16790 / HBSQ001).